A 976-amino-acid polypeptide reads, in one-letter code: Vacuolar membrane protease (976 aa).

Residues 1-15 (MKLKSVFRSVLKYRK) lie on the Cytoplasmic side of the membrane. A helical transmembrane segment spans residues 16 to 36 (TNLSLLLLITYSIITLLYIFD). Over 37–359 (HERYKLNLPK…KFFVISAKTL (323 aa)) the chain is Vacuolar. N-linked (GlcNAc...) asparagine glycans are attached at residues Asn96 and Asn121. 2 residues coordinate Zn(2+): His156 and Asp168. N-linked (GlcNAc...) asparagine glycosylation is present at Asn189. The Proton acceptor role is filled by Glu200. Glu201 contacts Zn(2+). N-linked (GlcNAc...) asparagine glycans are attached at residues Asn212 and Asn217. Residues Glu226 and His300 each contribute to the Zn(2+) site. Residues 360–380 (FYWNCIFLLVSPVVAIGLYLI) form a helical membrane-spanning segment. Topologically, residues 381-392 (SRDRMTWKSHSW) are cytoplasmic. Residues 393–412 (LSWTRFPLSLAAGIIVQKLF) form a helical membrane-spanning segment. Residues 413 to 428 (SNDIIRSNPLTFSRNY) lie on the Vacuolar side of the membrane. Residues 429–449 (FWPISAFFTQVIFTSYVLINC) form a helical membrane-spanning segment. At 450–461 (SNFFFPCADMKS) the chain is on the cytoplasmic side. Residues 462–482 (LSIIELFIILWTILLFTSKLL) traverse the membrane as a helical segment. At 483–496 (YSSDYRYTGLYPLS) the chain is on the vacuolar side. Residues 497–517 (IFFLLSTIAAILRLLALALGM) form a helical membrane-spanning segment. Residues 518–627 (RTRKRLGREC…NSLKLEYTDY (110 aa)) lie on the Cytoplasmic side of the membrane. Positions 528–610 (RDHHSNYSSH…PLLKGSNSME (83 aa)) are disordered. Polar residues predominate over residues 549–558 (NLEQPQDQFT). Residues 559-570 (SSQDDQASIQDD) show a composition bias toward low complexity. Residues 582 to 601 (NVDEDHGMDSSSQQHDERVP) are compositionally biased toward basic and acidic residues. Residues 628-648 (AWIIQFLLIVPIPSFILFNSV) form a helical membrane-spanning segment. The Vacuolar segment spans residues 649–668 (DVIMDALNHTVQEGSKATFD). The N-linked (GlcNAc...) asparagine glycan is linked to Asn656. A helical membrane pass occupies residues 669–689 (VLRFGMVGSILMALPILPFFY). Over 690–692 (KVN) the chain is Cytoplasmic. Residues 693–713 (YITISLTALLFLISASKTLLV) traverse the membrane as a helical segment. Over 714 to 976 (HPFTNSNPLK…LVIVKDAIIL (263 aa)) the chain is Vacuolar. N-linked (GlcNAc...) asparagine glycans are attached at residues Asn768, Asn796, Asn811, Asn866, and Asn937.

Belongs to the peptidase M28 family. Zn(2+) serves as cofactor.

Its subcellular location is the vacuole membrane. In terms of biological role, may be involved in vacuolar sorting and osmoregulation. This is Vacuolar membrane protease from Saccharomyces cerevisiae (strain AWRI1631) (Baker's yeast).